We begin with the raw amino-acid sequence, 417 residues long: uncharacterized protein (417 aa).

This sequence belongs to the MG032/MG096/MG288 family.

This is an uncharacterized protein from Mycoplasma pneumoniae (strain ATCC 29342 / M129 / Subtype 1) (Mycoplasmoides pneumoniae).